The chain runs to 138 residues: Acidic phospholipase A2 PL1 (138 aa).

The first 16 residues, 1–16 (MRALWIVAVCLIGAEG), serve as a signal peptide directing secretion. 7 disulfides stabilise this stretch: Cys42–Cys131, Cys44–Cys60, Cys59–Cys111, Cys65–Cys138, Cys66–Cys104, Cys73–Cys97, and Cys91–Cys102. Positions 43, 45, and 47 each coordinate Ca(2+). His63 is a catalytic residue. Position 64 (Asp64) interacts with Ca(2+). Asp105 is a catalytic residue.

It belongs to the phospholipase A2 family. Group II subfamily. D49 sub-subfamily. It depends on Ca(2+) as a cofactor. As to expression, expressed by the venom gland.

It localises to the secreted. The enzyme catalyses a 1,2-diacyl-sn-glycero-3-phosphocholine + H2O = a 1-acyl-sn-glycero-3-phosphocholine + a fatty acid + H(+). Functionally, PLA2 catalyzes the calcium-dependent hydrolysis of the 2-acyl groups in 3-sn-phosphoglycerides. The chain is Acidic phospholipase A2 PL1 from Vipera renardi (Steppe viper).